A 129-amino-acid chain; its full sequence is Small ribosomal subunit protein uS11 (129 aa).

Belongs to the universal ribosomal protein uS11 family. As to quaternary structure, part of the 30S ribosomal subunit. Interacts with proteins S7 and S18. Binds to IF-3.

Located on the platform of the 30S subunit, it bridges several disparate RNA helices of the 16S rRNA. Forms part of the Shine-Dalgarno cleft in the 70S ribosome. The sequence is that of Small ribosomal subunit protein uS11 from Azobacteroides pseudotrichonymphae genomovar. CFP2.